A 396-amino-acid chain; its full sequence is Gap junction gamma-1 protein (396 aa).

The Cytoplasmic segment spans residues 1–22 (MSWSFLTRLLEEIHNHSTFVGK). A helical membrane pass occupies residues 23–45 (IWLTVLIVFRIVLTAVGGESIYY). Residues 46–75 (DEQSKFVCNTEQPGCENVCYDAFAPLSHVR) are Extracellular-facing. Residues 76–95 (FWVFQIILVATPSVMYLGYA) traverse the membrane as a helical segment. Topologically, residues 96–175 (IHKIAKMEHG…RRIREDGLMK (80 aa)) are cytoplasmic. A disordered region spans residues 145-165 (ELESEKENKEQNQSKPKHDGR). Residues 147 to 156 (ESEKENKEQN) are compositionally biased toward basic and acidic residues. A helical transmembrane segment spans residues 176 to 198 (IYVLQLLARTMFEVGFLIGQYFL). Topologically, residues 199 to 228 (YGFQVHPFYVCSRVPCPHKIDCFISRPTEK) are extracellular. A helical membrane pass occupies residues 229 to 248 (TIFLLIMYGVTGLCLLLNIW). Over 249–396 (EMLHLGFGTI…SGDGKTSVWI (148 aa)) the chain is Cytoplasmic. The disordered stretch occupies residues 357–396 (NHQNNPHGPREKKAKVGSKAGSNKSSASSKSGDGKTSVWI). A compositionally biased stretch (low complexity) spans 373-396 (GSKAGSNKSSASSKSGDGKTSVWI).

The protein belongs to the connexin family. Gamma-type subfamily. A connexon is composed of a hexamer of connexins. Interacts with CNST.

It localises to the cell membrane. Its subcellular location is the cell junction. It is found in the gap junction. Its function is as follows. One gap junction consists of a cluster of closely packed pairs of transmembrane channels, the connexons, through which materials of low MW diffuse from one cell to a neighboring cell. In Sus scrofa (Pig), this protein is Gap junction gamma-1 protein (GJC1).